Reading from the N-terminus, the 633-residue chain is Phosphomethylpyrimidine synthase (633 aa).

Substrate is bound by residues Asn-245, Met-274, Tyr-303, His-339, 359–361, 400–403, and Glu-439; these read SRG and DGLR. Residue His-443 participates in Zn(2+) binding. Tyr-466 contributes to the substrate binding site. Zn(2+) is bound at residue His-507. [4Fe-4S] cluster-binding residues include Cys-587, Cys-590, and Cys-595.

This sequence belongs to the ThiC family. In terms of assembly, homodimer. [4Fe-4S] cluster serves as cofactor.

The catalysed reaction is 5-amino-1-(5-phospho-beta-D-ribosyl)imidazole + S-adenosyl-L-methionine = 4-amino-2-methyl-5-(phosphooxymethyl)pyrimidine + CO + 5'-deoxyadenosine + formate + L-methionine + 3 H(+). The protein operates within cofactor biosynthesis; thiamine diphosphate biosynthesis. Its function is as follows. Catalyzes the synthesis of the hydroxymethylpyrimidine phosphate (HMP-P) moiety of thiamine from aminoimidazole ribotide (AIR) in a radical S-adenosyl-L-methionine (SAM)-dependent reaction. The chain is Phosphomethylpyrimidine synthase from Neisseria gonorrhoeae (strain ATCC 700825 / FA 1090).